A 391-amino-acid chain; its full sequence is Ectodysplasin-A (391 aa).

Basic and acidic residues predominate over residues 1–21 (MGYPEVERREPLPAAAPRERG). Residues 1-28 (MGYPEVERREPLPAAAPRERGSQGCGCR) are disordered. Residues 1-41 (MGYPEVERREPLPAAAPRERGSQGCGCRGAPARAGEGNSCR) are Cytoplasmic-facing. The chain crosses the membrane as a helical; Signal-anchor for type II membrane protein span at residues 42-62 (LFLGFFGLSLALHLLTLCCYL). Topologically, residues 63-391 (ELRSELRRER…AIRLGEAPAS (329 aa)) are extracellular. Disordered stretches follow at residues 73–130 (GAES…SQDG) and 145–245 (SYSE…GTRE). Residues 76–96 (SRFSGPGTPGTSGTLSSPGGL) are compositionally biased toward low complexity. The Collagen-like domain maps to 180–229 (GPPGPNGPPGPPGPPGPQGPPGIPGIPGIPGTTVMGPPGPPGPPGPQGPP). 2 stretches are compositionally biased toward pro residues: residues 181–203 (PPGP…PGIP) and 216–228 (PPGP…PQGP). Positions 249 to 385 (AVVHLQGQGS…HTTFFGAIRL (137 aa)) constitute a THD domain. A glycan (N-linked (GlcNAc...) asparagine) is linked at asparagine 313. Cysteine 332 and cysteine 346 form a disulfide bridge. A glycan (N-linked (GlcNAc...) asparagine) is linked at asparagine 372.

Belongs to the tumor necrosis factor family. In terms of assembly, homotrimer. The homotrimers may then dimerize and form higher-order oligomers. N-glycosylated. Post-translationally, processing by furin produces a secreted form.

Its subcellular location is the cell membrane. The protein resides in the secreted. In terms of biological role, cytokine which is involved in epithelial-mesenchymal signaling during morphogenesis of ectodermal organs. Functions as a ligand activating the DEATH-domain containing receptors EDAR and EDA2R. Isoform A1 binds only to the receptor EDAR, while isoform A2 binds exclusively to the receptor EDA2R. May also play a role in cell adhesion. Isoform A1 binds only to the receptor EDAR, while isoform A2 binds exclusively to the receptor EDA2R. Functionally, isoform A2 binds exclusively to the receptor EDA2R. The polypeptide is Ectodysplasin-A (EDA) (Bos taurus (Bovine)).